Here is a 1003-residue protein sequence, read N- to C-terminus: Glycine--tRNA ligase (1003 aa).

Residues 1 to 310 are glycine--tRNA ligase alpha subunit; that stretch reads MSSQPLTLQA…VTPKKIPTIC (310 aa). Residues 311-1003 form a glycine--tRNA ligase beta subunit region; it reads QPEDFLLEIG…CFGFYAWDVL (693 aa).

It belongs to the class-II aminoacyl-tRNA synthetase family.

The protein resides in the cytoplasm. It carries out the reaction tRNA(Gly) + glycine + ATP = glycyl-tRNA(Gly) + AMP + diphosphate. The polypeptide is Glycine--tRNA ligase (glyQS) (Chlamydia trachomatis serovar L2 (strain ATCC VR-902B / DSM 19102 / 434/Bu)).